A 953-amino-acid polypeptide reads, in one-letter code: MTAAENVCYTLINVPMDSEPPSEISLKNDLEKGDVKSKTEALKKVIIMILNGEKLPGLLMTIIRFVLPLQDHTIKKLLLVFWEIVPKTTPDGRLLHEMILVCDAYRKDLQHPNEFIRGSTLRFLCKLKEAELLEPLMPAIRACLEHRHSYVRRNAVLAIYTIYRNFENLIPDAPELIHDFLVNEKDASCKRNAFMMLIHADQDRALDYLSTCIDQVQTFGDILQLVIVELIYKVCHANPSERARFIRCIYNLLQSSSPAVKYEAAGTLVTLSSAPTAIKAAAQCYIDLIIKESDNNVKLIVLDRLVELKEHPAHERVLQDLVMDILRVLSTPDLEVRKKTLQLALDLVSSRNVEELVIVLKKEVIKTNNVSEHEDTDKYRQLLVRTLHSCSVRFPDMAANVIPVLMEFLSDSNEAAAADVLEFVREAIQRFDNLRMLIVEKMLEVFHAIKSVKIYRGALWILGEYCSTKEDIQSVMTEVRRSLGEIPIVESEIKKEAGELKPEEEITVGPVQKLVTEMGTYATQSALSSSRPTKKEEDRPPLRGFLLDGDFFVAASLATTLTKIALRYVALVQEKKKQNSFVAEAMLLMATILHLGKSSLPKKPITDDDVDRISLCLKVLSECSPLMNDIFNKECRQSLSQMLSAKLEEEKLSQKKESEKRNVTVQPDDPISFMQLTAKNEMNCKEDQFQLSLLAAMGNTQRKEAADPLASKLNKVTQLTGFSDPVYAEAYVHVNQYDIVLDVLVVNQTSDTLQNCTLELATLGDLKLVEKPSPLTLAPHDFANIKANVKVASTENGIIFGNIVYDVSGAASDRNCVVLSDIHIDIMDYIQPATCTDAEFRQMWAEFEWENKVTVNTNVTDLNDYLQHILKSTNMKCLTPEKALSGYCGFMAANLYARSIFGEDALANVSIEKPVHQGPDAAVTGHIRIRAKSQGMALSLGDKINLSQKKTSL.

N-acetylthreonine is present on Thr-2. HEAT repeat units lie at residues 96–131 (HEMI…KEAE), 132–168 (LLEP…NFEN), 240–276 (SERA…SAPT), 277–314 (AIKA…HPAH), 316–353 (RVLQ…SRNV), and 396–433 (DMAA…RFDN). Lys-494 bears the N6-acetyllysine mark.

As to quaternary structure, oligomeric complex that consists of at least the alpha, beta, beta', gamma, delta, epsilon and zeta subunits. Interacts with SCYL1. Interacts with CAPN8. Interacts with COPG1. Interacts with ARF1 (myristoylated); this interaction is required for binding of COPB1 to Golgi membranes. Interacts (via trunk domain) with ARF1 (via switch I region); the interaction is direct. Interacts with KCNK2 (via N-terminus); this interaction increases the channel-mediated whole cell currents and promotes plasma membrane expression of KCNK2. Interacts with PRKCE. Interacts with STX17. Interacts with TMEM115. Interacts with TMEM41B. Proteolytically cleaved between Ser-528 and Ser-529 by CAPN8.

It is found in the cytoplasm. It localises to the golgi apparatus membrane. Its subcellular location is the cytoplasmic vesicle. The protein localises to the COPI-coated vesicle membrane. The protein resides in the cell membrane. It is found in the endoplasmic reticulum-Golgi intermediate compartment. It localises to the microsome membrane. Functionally, the coatomer is a cytosolic protein complex that binds to dilysine motifs and reversibly associates with Golgi non-clathrin-coated vesicles, which further mediate biosynthetic protein transport from the ER, via the Golgi up to the trans Golgi network. Coatomer complex is required for budding from Golgi membranes, and is essential for the retrograde Golgi-to-ER transport of dilysine-tagged proteins. In mammals, the coatomer can only be recruited by membranes associated to ADP-ribosylation factors (ARFs), which are small GTP-binding proteins; the complex also influences the Golgi structural integrity, as well as the processing, activity, and endocytic recycling of LDL receptors. Involved in the Golgi disassembly and reassembly processes during cell cycle. Involved in autophagy by playing a role in early endosome function. Plays a role in organellar compartmentalization of secretory compartments including endoplasmic reticulum (ER)-Golgi intermediate compartment (ERGIC), Golgi, trans-Golgi network (TGN) and recycling endosomes, and in biosynthetic transport of CAV1. Plays a functional role in facilitating the transport of kappa-type opioid receptor mRNAs into axons and enhances translation of these proteins in the axonal compartment of dorsal root ganglion (DRG) cells. Required for limiting lipid storage in lipid droplets. Involved in lipid homeostasis by regulating the presence of perilipin family members PLIN2 and PLIN3 at the lipid droplet surface and promoting the association of adipocyte triglyceride lipase (PNPLA2) with the lipid droplet surface to mediate lipolysis. The protein is Coatomer subunit beta (Copb1) of Rattus norvegicus (Rat).